A 156-amino-acid chain; its full sequence is Small ribosomal subunit protein uS7 (156 aa).

It belongs to the universal ribosomal protein uS7 family. As to quaternary structure, part of the 30S ribosomal subunit. Contacts proteins S9 and S11.

Functionally, one of the primary rRNA binding proteins, it binds directly to 16S rRNA where it nucleates assembly of the head domain of the 30S subunit. Is located at the subunit interface close to the decoding center, probably blocks exit of the E-site tRNA. The chain is Small ribosomal subunit protein uS7 from Rhodopseudomonas palustris (strain BisB18).